We begin with the raw amino-acid sequence, 708 residues long: Polyribonucleotide nucleotidyltransferase (708 aa).

Mg(2+) is bound by residues Asp486 and Asp492. The KH domain maps to 553–612; the sequence is PRIIKFKINPEKIRDVIGKGGAVIRALTEETGTTIDISDDGSVTIACVSSEGGEQARKRI. The 69-residue stretch at 622 to 690 folds into the S1 motif domain; that stretch reads GRIYEGTVLK…EKGRLRLSMK (69 aa).

The protein belongs to the polyribonucleotide nucleotidyltransferase family. Requires Mg(2+) as cofactor.

Its subcellular location is the cytoplasm. It carries out the reaction RNA(n+1) + phosphate = RNA(n) + a ribonucleoside 5'-diphosphate. Involved in mRNA degradation. Catalyzes the phosphorolysis of single-stranded polyribonucleotides processively in the 3'- to 5'-direction. The protein is Polyribonucleotide nucleotidyltransferase of Nitrosomonas europaea (strain ATCC 19718 / CIP 103999 / KCTC 2705 / NBRC 14298).